We begin with the raw amino-acid sequence, 286 residues long: ATP synthase gamma chain (286 aa).

It belongs to the ATPase gamma chain family. In terms of assembly, F-type ATPases have 2 components, CF(1) - the catalytic core - and CF(0) - the membrane proton channel. CF(1) has five subunits: alpha(3), beta(3), gamma(1), delta(1), epsilon(1). CF(0) has three main subunits: a, b and c.

The protein resides in the cell inner membrane. Functionally, produces ATP from ADP in the presence of a proton gradient across the membrane. The gamma chain is believed to be important in regulating ATPase activity and the flow of protons through the CF(0) complex. The polypeptide is ATP synthase gamma chain (Flavobacterium johnsoniae (strain ATCC 17061 / DSM 2064 / JCM 8514 / BCRC 14874 / CCUG 350202 / NBRC 14942 / NCIMB 11054 / UW101) (Cytophaga johnsonae)).